Reading from the N-terminus, the 82-residue chain is Beta-defensin 113 (82 aa).

The signal sequence occupies residues 1–16 (MKILCIFLTFVFTVSC). 3 disulfides stabilise this stretch: cysteine 35/cysteine 61, cysteine 42/cysteine 56, and cysteine 46/cysteine 62.

This sequence belongs to the beta-defensin family.

The protein resides in the secreted. Its function is as follows. Has antibacterial activity. This Homo sapiens (Human) protein is Beta-defensin 113 (DEFB113).